The primary structure comprises 458 residues: Exodeoxyribonuclease 7 large subunit (458 aa).

This sequence belongs to the XseA family. Heterooligomer composed of large and small subunits.

The protein localises to the cytoplasm. The enzyme catalyses Exonucleolytic cleavage in either 5'- to 3'- or 3'- to 5'-direction to yield nucleoside 5'-phosphates.. Its function is as follows. Bidirectionally degrades single-stranded DNA into large acid-insoluble oligonucleotides, which are then degraded further into small acid-soluble oligonucleotides. The sequence is that of Exodeoxyribonuclease 7 large subunit from Escherichia coli O17:K52:H18 (strain UMN026 / ExPEC).